The primary structure comprises 25 residues: Antithrombin-III (25 aa).

This sequence belongs to the serpin family. In terms of assembly, forms protease inhibiting heterodimer with TMPRSS7. Post-translationally, phosphorylated by FAM20C in the extracellular medium. As to expression, plasma.

It is found in the secreted. The protein localises to the extracellular space. Its function is as follows. Most important serine protease inhibitor in plasma that regulates the blood coagulation cascade. AT-III inhibits thrombin, matriptase-3/TMPRSS7, as well as factors IXa, Xa and XIa. Its inhibitory activity is greatly enhanced in the presence of heparin. This chain is Antithrombin-III (SERPINC1), found in Mesocricetus auratus (Golden hamster).